We begin with the raw amino-acid sequence, 166 residues long: Probable RNA-binding protein EIF1AD (166 aa).

The S1-like domain maps to 5–89 (TKRKHVVKEV…VKAEISFVLC (85 aa)). Residues 6 to 12 (KRKHVVK) carry the Nuclear localization signal motif. Position 33 is a phosphothreonine (threonine 33). Residues 56-65 (KYRKNIWIKR) carry the Nuclear localization signal motif. The segment at 114-166 (NNNRNRQTQPELPAEPQLSGEESSSEDDSDLFVNTNRRQYRESEEESEEEEAA) is disordered. Serine 132, serine 136, serine 137, serine 138, serine 156, and serine 160 each carry phosphoserine. Over residues 156–166 (SEEESEEEEAA) the composition is skewed to acidic residues.

Belongs to the EIF1AD family. In terms of assembly, interacts with GAPDH and STAT1.

It localises to the nucleus. Its function is as follows. Plays a role into cellular response to oxidative stress. Decreases cell proliferation. The chain is Probable RNA-binding protein EIF1AD (EIF1AD) from Pongo abelii (Sumatran orangutan).